The chain runs to 393 residues: Isocitrate dehydrogenase [NAD] subunit gamma, mitochondrial (393 aa).

The transit peptide at 1–39 (MALKVATVAGSAAKAVLGPALLCRPWEVLGAHEVPSRNI) directs the protein to the mitochondrion. Thr120 and Asn133 together coordinate citrate. Substrate contacts are provided by Arg136, Arg167, and Asp254. A Mn(2+)-binding site is contributed by Asp254. Residues Asn312, Thr313, and Asn324 each contribute to the ADP site.

The protein belongs to the isocitrate and isopropylmalate dehydrogenases family. In terms of assembly, heterooligomer of subunits alpha (IDH3A), beta (IDH3B), and gamma (IDH3G) in the apparent ratio of 2:1:1. The heterodimer containing one IDH3A and one IDH3B subunit and the heterodimer containing one IDH3A and one IDH3G subunit assemble into a heterotetramer (which contains two subunits of IDH3A, one of IDH3B and one of IDH3G) and further into the heterooctamer. It depends on Mg(2+) as a cofactor. Mn(2+) is required as a cofactor.

It localises to the mitochondrion. With respect to regulation, the heterotetramer and the heterodimer composed of IDH3A and IDH3G subunits can be allosterically activated by citrate (CIT) or/and ADP, and the two activators can act independently or synergistically. The heterodimer composed of IDH3A and IDH3B subunits cannot be allosterically regulated and the allosteric regulation of the heterotetramer is through the IDH3G subunit and not the IDH3B subunit. The IDH3G subunit contains the allosteric site which consists of a CIT-binding site and an ADP-binding site, and the binding of CIT and ADP causes conformational changes at the allosteric site which are transmitted to the active site in the catalytic subunit (IDH3A) through a cascade of conformational changes at the heterodimer interface, leading to stabilization of the isocitrate-binding at the active site and thus activation of the enzyme. ATP can activate the heterotetramer and the heterodimer composed of IDH3A and IDH3G subunits at low concentrations but inhibits their activities at high concentrations, whereas ATP exhibits only inhibitory effect on the heterodimer composed of IDH3A and IDH3B subunits. In terms of biological role, regulatory subunit which plays a role in the allosteric regulation of the enzyme catalyzing the decarboxylation of isocitrate (ICT) into alpha-ketoglutarate. The heterodimer composed of the alpha (IDH3A) and beta (IDH3B) subunits and the heterodimer composed of the alpha (IDH3A) and gamma (IDH3G) subunits, have considerable basal activity but the full activity of the heterotetramer (containing two subunits of IDH3A, one of IDH3B and one of IDH3G) requires the assembly and cooperative function of both heterodimers. This chain is Isocitrate dehydrogenase [NAD] subunit gamma, mitochondrial (IDH3G), found in Homo sapiens (Human).